We begin with the raw amino-acid sequence, 455 residues long: UDP-N-acetylmuramoylalanine--D-glutamate ligase (455 aa).

An ATP-binding site is contributed by 119–125 (GTNGKTT).

Belongs to the MurCDEF family.

The protein localises to the cytoplasm. The catalysed reaction is UDP-N-acetyl-alpha-D-muramoyl-L-alanine + D-glutamate + ATP = UDP-N-acetyl-alpha-D-muramoyl-L-alanyl-D-glutamate + ADP + phosphate + H(+). The protein operates within cell wall biogenesis; peptidoglycan biosynthesis. Cell wall formation. Catalyzes the addition of glutamate to the nucleotide precursor UDP-N-acetylmuramoyl-L-alanine (UMA). The polypeptide is UDP-N-acetylmuramoylalanine--D-glutamate ligase (Listeria monocytogenes serovar 1/2a (strain ATCC BAA-679 / EGD-e)).